Consider the following 295-residue polypeptide: UDP-N-acetylenolpyruvoylglucosamine reductase (295 aa).

The FAD-binding PCMH-type domain occupies 23-188; it reads QVGGPADFLA…ISAKFALKPG (166 aa). The active site involves Arg167. The active-site Proton donor is the Ser217. Glu287 is an active-site residue.

It belongs to the MurB family. The cofactor is FAD.

The protein localises to the cytoplasm. The catalysed reaction is UDP-N-acetyl-alpha-D-muramate + NADP(+) = UDP-N-acetyl-3-O-(1-carboxyvinyl)-alpha-D-glucosamine + NADPH + H(+). It functions in the pathway cell wall biogenesis; peptidoglycan biosynthesis. Cell wall formation. This Streptococcus equi subsp. equi (strain 4047) protein is UDP-N-acetylenolpyruvoylglucosamine reductase.